Consider the following 701-residue polypeptide: Long chain acyl-CoA synthetase 6, peroxisomal (701 aa).

Residues 1–38 (MDSSSSSSSAAARRRINAIHSHLVTSSRSSPLLRSNPT) constitute a propeptide, removed in mature form. The Microbody targeting signal motif lies at 15–23 (RINAIHSHL). An ATP-binding site is contributed by 266 to 277 (ICYTSGTTGTPK). The interval 526-550 (DGWLHTGDIGLWLPGGRLKIIDRKK) is fatty acid-binding.

This sequence belongs to the ATP-dependent AMP-binding enzyme family. Mg(2+) serves as cofactor. As to expression, expressed in roots, stems, leaves flowers and germinating seedling. Preferentially expressed in seeds and senescent leaves.

It is found in the peroxisome. It localises to the glyoxysome membrane. It catalyses the reaction a long-chain fatty acid + ATP + CoA = a long-chain fatty acyl-CoA + AMP + diphosphate. It carries out the reaction tetradecanoate + ATP + CoA = tetradecanoyl-CoA + AMP + diphosphate. The catalysed reaction is hexadecanoate + ATP + CoA = hexadecanoyl-CoA + AMP + diphosphate. The enzyme catalyses (9Z)-octadecenoate + ATP + CoA = (9Z)-octadecenoyl-CoA + AMP + diphosphate. It catalyses the reaction (9Z,12Z)-octadecadienoate + ATP + CoA = (9Z,12Z)-octadecadienoyl-CoA + AMP + diphosphate. It carries out the reaction (9Z,12Z,15Z)-octadecatrienoate + ATP + CoA = (9Z,12Z,15Z)-octadecatrienoyl-CoA + AMP + diphosphate. It functions in the pathway lipid metabolism; fatty acid metabolism. Its function is as follows. Activation of long-chain fatty acids for both synthesis of cellular lipids, and degradation via beta-oxidation. Preferentially uses palmitate, palmitoleate, oleate, linoleate and eicosenoate as substrates. Can use myristate and linolenate as substrates. May play a regulatory role both in fatty acid import into glyoxysomes and in fatty acid beta-oxidation. Functions redundantly with LACS7 in lipid mobilization for beta-oxidation during seed germination, which is essential for postgerminative growth and seedling establishment. This is Long chain acyl-CoA synthetase 6, peroxisomal from Arabidopsis thaliana (Mouse-ear cress).